The primary structure comprises 273 residues: Putative phosphoenolpyruvate synthase regulatory protein (273 aa).

153–160 contributes to the ADP binding site; that stretch reads GVSRSGKT.

This sequence belongs to the pyruvate, phosphate/water dikinase regulatory protein family. PSRP subfamily.

It carries out the reaction [pyruvate, water dikinase] + ADP = [pyruvate, water dikinase]-phosphate + AMP + H(+). The catalysed reaction is [pyruvate, water dikinase]-phosphate + phosphate + H(+) = [pyruvate, water dikinase] + diphosphate. Functionally, bifunctional serine/threonine kinase and phosphorylase involved in the regulation of the phosphoenolpyruvate synthase (PEPS) by catalyzing its phosphorylation/dephosphorylation. The protein is Putative phosphoenolpyruvate synthase regulatory protein of Verminephrobacter eiseniae (strain EF01-2).